The sequence spans 66 residues: Large ribosomal subunit protein uL29 (66 aa).

This sequence belongs to the universal ribosomal protein uL29 family.

This is Large ribosomal subunit protein uL29 from Allorhizobium ampelinum (strain ATCC BAA-846 / DSM 112012 / S4) (Agrobacterium vitis (strain S4)).